A 178-amino-acid polypeptide reads, in one-letter code: ATP synthase subunit b, chloroplastic (178 aa).

The chain crosses the membrane as a helical span at residues 34 to 50 (LAILTGGIFYLGSNALS).

This sequence belongs to the ATPase B chain family. As to quaternary structure, F-type ATPases have 2 components, F(1) - the catalytic core - and F(0) - the membrane proton channel. F(1) has five subunits: alpha(3), beta(3), gamma(1), delta(1), epsilon(1). F(0) has four main subunits: a(1), b(1), b'(1) and c(10-14). The alpha and beta chains form an alternating ring which encloses part of the gamma chain. F(1) is attached to F(0) by a central stalk formed by the gamma and epsilon chains, while a peripheral stalk is formed by the delta, b and b' chains.

It localises to the plastid. It is found in the chloroplast thylakoid membrane. Its function is as follows. F(1)F(0) ATP synthase produces ATP from ADP in the presence of a proton or sodium gradient. F-type ATPases consist of two structural domains, F(1) containing the extramembraneous catalytic core and F(0) containing the membrane proton channel, linked together by a central stalk and a peripheral stalk. During catalysis, ATP synthesis in the catalytic domain of F(1) is coupled via a rotary mechanism of the central stalk subunits to proton translocation. In terms of biological role, component of the F(0) channel, it forms part of the peripheral stalk, linking F(1) to F(0). In Ochrosphaera neapolitana, this protein is ATP synthase subunit b, chloroplastic.